Consider the following 141-residue polypeptide: Superoxide dismutase [Cu-Zn], chloroplastic (141 aa).

Residues His-33, His-35, and His-50 each coordinate Cu cation. A disulfide bond links Cys-44 and Cys-133. Zn(2+)-binding residues include His-50, His-58, His-67, and Asp-70. Position 107 (His-107) interacts with Cu cation.

Belongs to the Cu-Zn superoxide dismutase family. As to quaternary structure, homotetramer. The cofactor is Cu cation. It depends on Zn(2+) as a cofactor.

The protein resides in the plastid. The protein localises to the chloroplast. The catalysed reaction is 2 superoxide + 2 H(+) = H2O2 + O2. In terms of biological role, destroys radicals which are normally produced within the cells and which are toxic to biological systems. This is Superoxide dismutase [Cu-Zn], chloroplastic (SODCP) from Pinus sylvestris (Scotch pine).